We begin with the raw amino-acid sequence, 1024 residues long: Integrator complex subunit 7 homolog (1024 aa).

Polar residues-rich tracts occupy residues 1 to 11 (MSKYKNSSLLN) and 19 to 36 (PSLSNGSSVLGISNQLPP). Disordered stretches follow at residues 1-109 (MSKY…PTNS), 472-502 (DNNNNNNNNNNNNNNNNNNNNNNNNNNNNNN), and 842-863 (NNNNNNNNNNNNNNNNNNNNNN). Low complexity-rich tracts occupy residues 44–77 (STNNQQSTTTPTTVTIQPPSSSISTPSPTTNNTV), 85–96 (TAGSSTSSASSV), and 473–502 (NNNNNNNNNNNNNNNNNNNNNNNNNNNNNN).

Belongs to the Integrator subunit 7 family. As to quaternary structure, component of the Integrator complex. The core complex associates with protein phosphatase 2A subunits, to form the Integrator-PP2A (INTAC) complex.

The protein resides in the nucleus. It localises to the chromosome. It is found in the cytoplasm. In terms of biological role, component of the integrator complex, a multiprotein complex that terminates RNA polymerase II (Pol II) transcription in the promoter-proximal region of genes. The integrator complex provides a quality checkpoint during transcription elongation by driving premature transcription termination of transcripts that are unfavorably configured for transcriptional elongation: the complex terminates transcription by (1) catalyzing dephosphorylation of the C-terminal domain (CTD) of Pol II subunit polr2a, (2) degrading the exiting nascent RNA transcript via endonuclease activity and (3) promoting the release of Pol II from bound DNA. The integrator complex is also involved in terminating the synthesis of non-coding Pol II transcripts, such as enhancer RNAs (eRNAs), small nuclear RNAs (snRNAs), telomerase RNAs and long non-coding RNAs (lncRNAs). This chain is Integrator complex subunit 7 homolog (ints7), found in Dictyostelium discoideum (Social amoeba).